Reading from the N-terminus, the 407-residue chain is MTSEIHCDSLWYGADIVTMRDGKYHTLSNGAIATRDGKIVWLGEYDALPATLTADERVKFDGGIITPGFIDCHTHLVFGGNRSAEFEQRLNGVSYAEIAAQGGGIISTVKATRDADEERLLEQALFRLRPLLAEGVTCVEIKSGYGLTPESEMKMLRVARRLGELLPVEVKTTCLAAHALPPEYANRADDYIDLVCNTIIPQAAAAGLADAVDAFCEHLAFSPAQVARVFAAAEAAGLPVKLHAEQLSALGGSELAAQHHALSADHLEYATEQDARAMGDAGTVAVLLPGAYYLLRETQCPPVDLFRKHNVAMAIASDANPGTSPALSLRLMINMACTLFRLTPEEALAGVTTHAAKALGLQASHGTLETGKVADFIHWPLSRPAELAYWLGGQLPCTVIFRGEIRQ.

2 residues coordinate Fe(3+): H73 and H75. Zn(2+) contacts are provided by H73 and H75. Residues R82, Y145, and H178 each coordinate 4-imidazolone-5-propanoate. N-formimidoyl-L-glutamate is bound at residue Y145. H243 lines the Fe(3+) pocket. Position 243 (H243) interacts with Zn(2+). Q246 is a 4-imidazolone-5-propanoate binding site. D318 provides a ligand contact to Fe(3+). A Zn(2+)-binding site is contributed by D318. Positions 320 and 322 each coordinate N-formimidoyl-L-glutamate. T323 is a 4-imidazolone-5-propanoate binding site.

This sequence belongs to the metallo-dependent hydrolases superfamily. HutI family. The cofactor is Zn(2+). Requires Fe(3+) as cofactor.

It localises to the cytoplasm. The catalysed reaction is 4-imidazolone-5-propanoate + H2O = N-formimidoyl-L-glutamate. Its pathway is amino-acid degradation; L-histidine degradation into L-glutamate; N-formimidoyl-L-glutamate from L-histidine: step 3/3. Catalyzes the hydrolytic cleavage of the carbon-nitrogen bond in imidazolone-5-propanoate to yield N-formimidoyl-L-glutamate. It is the third step in the universal histidine degradation pathway. The protein is Imidazolonepropionase of Serratia proteamaculans (strain 568).